We begin with the raw amino-acid sequence, 120 residues long: Small ribosomal subunit protein eS24 (120 aa).

Residues 101-120 (RDAGTKQKKGGSKGGQGAKG) are disordered.

Belongs to the eukaryotic ribosomal protein eS24 family.

The polypeptide is Small ribosomal subunit protein eS24 (Saccharolobus islandicus (strain Y.N.15.51 / Yellowstone #2) (Sulfolobus islandicus)).